Consider the following 418-residue polypeptide: AP-3 complex subunit mu-1 (418 aa).

One can recognise an MHD domain in the interval asparagine 176–arginine 417.

It belongs to the adaptor complexes medium subunit family. As to quaternary structure, adaptor protein complex 3 (AP-3) is a heterotetramer composed of two large adaptins (delta-type subunit AP3D1 and beta-type subunit AP3B1 or AP3B2), a medium adaptin (mu-type subunit AP3M1 or AP3M2) and a small adaptin (sigma-type subunit APS1 or AP3S2). Interacts with AGAP1. AP-3 associates with the BLOC-1 complex.

The protein resides in the golgi apparatus. Its subcellular location is the cytoplasmic vesicle membrane. Functionally, part of the AP-3 complex, an adaptor-related complex which is not clathrin-associated. The complex is associated with the Golgi region as well as more peripheral structures. It facilitates the budding of vesicles from the Golgi membrane and may be directly involved in trafficking to lysosomes. In concert with the BLOC-1 complex, AP-3 is required to target cargos into vesicles assembled at cell bodies for delivery into neurites and nerve terminals. In Rattus norvegicus (Rat), this protein is AP-3 complex subunit mu-1 (Ap3m1).